The sequence spans 826 residues: Lon protease (826 aa).

The span at 1–20 (MSEEELNNRDTESKQEHDEN) shows a compositional bias: basic and acidic residues. A disordered region spans residues 1 to 27 (MSEEELNNRDTESKQEHDENNSNFEAG). The Lon N-terminal domain maps to 33 to 231 (LPVLPLREVI…KVHALLEKEL (199 aa)). Position 384–391 (384–391 (GPPGVGKT)) interacts with ATP. The Lon proteolytic domain maps to 620–801 (ENLVGMTTGL…SEALTFTLAE (182 aa)). Residues Ser707 and Lys750 contribute to the active site.

The protein belongs to the peptidase S16 family. In terms of assembly, homohexamer. Organized in a ring with a central cavity.

The protein resides in the cytoplasm. The catalysed reaction is Hydrolysis of proteins in presence of ATP.. Its function is as follows. ATP-dependent serine protease that mediates the selective degradation of mutant and abnormal proteins as well as certain short-lived regulatory proteins. Required for cellular homeostasis and for survival from DNA damage and developmental changes induced by stress. Degrades polypeptides processively to yield small peptide fragments that are 5 to 10 amino acids long. Binds to DNA in a double-stranded, site-specific manner. This is Lon protease from Neorickettsia sennetsu (strain ATCC VR-367 / Miyayama) (Ehrlichia sennetsu).